The chain runs to 78 residues: Cytochrome b-c1 complex subunit 10, mitochondrial (78 aa).

Residues 1–26 are Mitochondrial matrix-facing; that stretch reads MVSYVKGPAYKALSHFGKLNAPLVRS. The helical transmembrane segment at 27–46 threads the bilayer; the sequence is YIPNLVFWGAAAGGAVATFT. Residues 47–78 lie on the Mitochondrial intermembrane side of the membrane; sequence EGVPLFQKTFYEKIPFFGQHWIYNPDPEDVPV.

The protein belongs to the UQCR11/QCR10 family. Component of the ubiquinol-cytochrome c oxidoreductase (cytochrome b-c1 complex, complex III, CIII), a multisubunit enzyme composed of 10 subunits. The complex is composed of 3 respiratory subunits cytochrome b (COB), cytochrome c1 (CYT1) and Rieske protein (RIP1), 2 core protein subunits COR1 and QCR2, and 5 low-molecular weight protein subunits QCR6, QCR7, QCR8, QCR9 and QCR10. The complex exists as an obligatory dimer and forms supercomplexes (SCs) in the inner mitochondrial membrane with a monomer or a dimer of cytochrome c oxidase (complex IV, CIV), resulting in 2 different assemblies (supercomplexes III(2)IV and III(2)IV(2)).

It localises to the mitochondrion inner membrane. Component of the ubiquinol-cytochrome c oxidoreductase, a multisubunit transmembrane complex that is part of the mitochondrial electron transport chain which drives oxidative phosphorylation. The complex plays an important role in the uptake of multiple carbon sources present in different host niches. The sequence is that of Cytochrome b-c1 complex subunit 10, mitochondrial from Candida albicans (strain SC5314 / ATCC MYA-2876) (Yeast).